We begin with the raw amino-acid sequence, 114 residues long: Large ribosomal subunit protein uL22 (114 aa).

This sequence belongs to the universal ribosomal protein uL22 family. Part of the 50S ribosomal subunit.

In terms of biological role, this protein binds specifically to 23S rRNA; its binding is stimulated by other ribosomal proteins, e.g. L4, L17, and L20. It is important during the early stages of 50S assembly. It makes multiple contacts with different domains of the 23S rRNA in the assembled 50S subunit and ribosome. The globular domain of the protein is located near the polypeptide exit tunnel on the outside of the subunit, while an extended beta-hairpin is found that lines the wall of the exit tunnel in the center of the 70S ribosome. The protein is Large ribosomal subunit protein uL22 of Methylacidiphilum infernorum (isolate V4) (Methylokorus infernorum (strain V4)).